We begin with the raw amino-acid sequence, 369 residues long: Cyanuric acid amidohydrolase (369 aa).

The interval 1-100 is RU A; it reads MPRRAEILRL…HWLVIAAREA (100 aa). Substrate is bound by residues Arg-53 and 81-82; that span reads SG. An RU B region spans residues 106–242; sequence ALAVGQARTP…HEVVVMGMSP (137 aa). The active site involves Lys-155. Substrate is bound by residues Arg-187 and 225–226; that span reads SA. Ser-225 serves as the catalytic Nucleophile. An RU C region spans residues 248-369; that stretch reads LVIDHAVMAD…ARRSGAAGPA (122 aa). A Mg(2+)-binding site is contributed by Glu-296. Substrate is bound by residues Arg-323 and 342–343; that span reads SG. Mg(2+) is bound by residues Ala-345, Gln-348, Gly-349, Pro-350, and Gly-353.

The protein belongs to the cyclic amide hydrolase (CyAH) family. As to quaternary structure, homotetramer.

It carries out the reaction cyanurate + H2O = 1-carboxybiuret + H(+). Its pathway is xenobiotic degradation; atrazine degradation; biuret from cyanurate: step 1/1. Its activity is regulated as follows. Inhibited by barbituric acid. Its function is as follows. Responsible for the hydrolysis of cyanuric acid, an intermediate formed during catabolism of s-triazine based compounds in herbicides such as atrazine and polymers such as melamine. Catalyzes the hydrolytic opening of the s-triazine ring of cyanuric acid (2,4,6-trihydroxy-s-triazine) to yield carbon dioxide and carboxybiuret, which spontaneously decarboxylates to biuret. This is Cyanuric acid amidohydrolase from Methylobacterium sp. (strain 4-46).